The chain runs to 2049 residues: Nonribosomal peptide synthetase tcpP (2049 aa).

The segment at 13–395 is adenylation 1; that stretch reads RHHAEAHPEA…LGRKDQLIKN (383 aa). The 77-residue stretch at 497–573 folds into the Carrier 1 domain; that stretch reads ATADTKLSAL…EISNHIIEFD (77 aa). S534 is modified (O-(pantetheine 4'-phosphoryl)serine). A condensation 1 region spans residues 605–913; sequence REITMTDVQR…ALGSKMDLLS (309 aa). Residues 1071–1452 form an adenylation 2 region; it reads VAAWPMSVAL…GRADHQVKVR (382 aa). In terms of domain architecture, Carrier 2 spans 1550 to 1625; that stretch reads DHTELVVSQV…SLAASVKKHL (76 aa). The residue at position 1585 (S1585) is an O-(pantetheine 4'-phosphoryl)serine. The condensation 2 stretch occupies residues 1662–2044; that stretch reads MHKQASNPSS…FEQEICNLLD (383 aa).

It belongs to the NRP synthetase family.

Its pathway is secondary metabolite biosynthesis. Its function is as follows. Nonribosomal peptide synthetase; part of the gene cluster that mediates the biosynthesis of an unusual class of epipolythiodioxopiperazines (ETPs) lacking the reactive thiol group important for toxicity. Firstly, L-tyrosine is prenylated by tcpD, before undergoing condensation with L-glycine in a reaction catalyzed by the NRPS tcpP leading to the diketopiperazine (DKP) backbone. Afterwards the alpha-carbon of tyrosine is oxidized by the cytochrome P450 tcpC to form a hydroxyl group. However, in contrast other ETP biosynthesis pathways studied so far, tcpC is not able to bishydroxylate the DKP at both alpha-carbon positions, but hydroxylates the alpha-carbon of the tyrosine part and the nitrogen of the glycine part. The next steps involve an alpha,beta-elimination reaction catalyzed by tcpI, a methylation by the methyltransferase tcpN the action of the four enzyme cascade tcpG/K/J/I. Due to a dysfunctional cytochrome P450 monooxygenase tcpC, the pathway leads to the biosynthesis of probable non-toxic metabolites lacking the reactive thiol group. This Claviceps purpurea (strain 20.1) (Ergot fungus) protein is Nonribosomal peptide synthetase tcpP.